The sequence spans 629 residues: DNA mismatch repair protein MutL (629 aa).

The protein belongs to the DNA mismatch repair MutL/HexB family.

Functionally, this protein is involved in the repair of mismatches in DNA. It is required for dam-dependent methyl-directed DNA mismatch repair. May act as a 'molecular matchmaker', a protein that promotes the formation of a stable complex between two or more DNA-binding proteins in an ATP-dependent manner without itself being part of a final effector complex. This is DNA mismatch repair protein MutL from Haemophilus influenzae (strain PittGG).